Consider the following 293-residue polypeptide: Mitochondrial glycine transporter (293 aa).

Solcar repeat units follow at residues 6 to 85, 102 to 186, and 208 to 291; these read GGVP…SRSA, LQSY…AKEM, and ASAM…LLKL. The next 6 helical transmembrane spans lie at 12–37, 60–86, 108–133, 161–184, 212–238, and 266–284; these read LVSG…TRLQ, GTLP…RSAL, LLTG…VRYE, GAAA…EQAK, VNGV…KTRM, and GLSL…AWGI.

It belongs to the mitochondrial carrier (TC 2.A.29) family. SLC25A38 subfamily.

The protein resides in the mitochondrion inner membrane. The enzyme catalyses glycine(in) = glycine(out). Its function is as follows. Mitochondrial glycine transporter that imports glycine into the mitochondrial matrix. Plays an important role in providing glycine for the first enzymatic step in heme biosynthesis, the condensation of glycine with succinyl-CoA to produce 5-aminolevulinate (ALA) in the mitochondrial matrix. This is Mitochondrial glycine transporter from Eremothecium gossypii (strain ATCC 10895 / CBS 109.51 / FGSC 9923 / NRRL Y-1056) (Yeast).